A 511-amino-acid chain; its full sequence is Tyrosine--tRNA ligase, chloroplastic/mitochondrial (511 aa).

L-tyrosine is bound at residue Y118. Residue D122 coordinates ATP. The 'HIGH' region motif lies at 123 to 132 (PTAESLHLGN). Positions 162, 256, 260, 263, and 282 each coordinate L-tyrosine. The 'KMSKS' region signature appears at 318-322 (KFGKS). K321 is an ATP binding site. One can recognise an S4 RNA-binding domain in the interval 444-510 (LSIVDLSVSA…GKKNKVVVRI (67 aa)).

The protein belongs to the class-I aminoacyl-tRNA synthetase family.

Its subcellular location is the plastid. It localises to the chloroplast. The protein resides in the mitochondrion. The enzyme catalyses tRNA(Tyr) + L-tyrosine + ATP = L-tyrosyl-tRNA(Tyr) + AMP + diphosphate + H(+). Catalyzes the attachment of tyrosine to tRNA(Tyr) in a two-step reaction: tyrosine is first activated by ATP to form Tyr-AMP and then transferred to the acceptor end of tRNA(Tyr). The protein is Tyrosine--tRNA ligase, chloroplastic/mitochondrial of Arabidopsis thaliana (Mouse-ear cress).